Reading from the N-terminus, the 155-residue chain is Secreted RxLR effector protein RXLR-C301 (155 aa).

The N-terminal stretch at 1 to 24 (MRLYALSVSLLAAITLLACVIASA) is a signal peptide. The RxLR-dEER motif lies at 34-64 (RRLSQDVSETEITELSESKKPTAQDIDNEER).

It belongs to the RxLR effector family.

Its subcellular location is the secreted. The protein resides in the host cell membrane. Functionally, secreted effector that does not suppress pattern-triggered immunity (PTI) in plant host. This chain is Secreted RxLR effector protein RXLR-C301, found in Plasmopara halstedii (Downy mildew of sunflower).